A 163-amino-acid polypeptide reads, in one-letter code: Biotin carboxyl carrier protein of acetyl-CoA carboxylase (163 aa).

The region spanning 85–161 (GDFIVSPLVG…QFGSKLFRIV (77 aa)) is the Biotinyl-binding domain. An N6-biotinyllysine modification is found at lysine 127.

Homodimer.

The protein operates within lipid metabolism; fatty acid biosynthesis. Functionally, this protein is a component of the acetyl coenzyme A carboxylase complex; first, biotin carboxylase catalyzes the carboxylation of the carrier protein and then the transcarboxylase transfers the carboxyl group to form malonyl-CoA. In Chlamydia muridarum (strain MoPn / Nigg), this protein is Biotin carboxyl carrier protein of acetyl-CoA carboxylase (accB).